A 192-amino-acid polypeptide reads, in one-letter code: MTQDPHKMFDEWMDEAKKAETDDPTAMALATASKQAFPCVRMMLLKGHTKDGFVFFTNLGSRKGHELLENPVATLLFHWKKLRRQVRIEGAATLISDEEADAYFATRARKSQLGAWASEQSRPLPARDVFEKRIADIEARYEGKDVPRPPYWTGFRVSPIRMEFWNDREFRLHERELFTLNDGRWQSEFLYP.

FMN contacts are provided by residues 41 to 46, 56 to 57, R62, K63, and Q85; these read RMMLLK and FT. K46 contacts substrate. Residues Y103, R107, and S111 each contribute to the substrate site. FMN is bound by residues 120 to 121 and W165; that span reads QS. 171–173 is a binding site for substrate; it reads RLH. R175 contributes to the FMN binding site.

Belongs to the pyridoxamine 5'-phosphate oxidase family. Homodimer. The cofactor is FMN.

It catalyses the reaction pyridoxamine 5'-phosphate + O2 + H2O = pyridoxal 5'-phosphate + H2O2 + NH4(+). It carries out the reaction pyridoxine 5'-phosphate + O2 = pyridoxal 5'-phosphate + H2O2. Its pathway is cofactor metabolism; pyridoxal 5'-phosphate salvage; pyridoxal 5'-phosphate from pyridoxamine 5'-phosphate: step 1/1. It functions in the pathway cofactor metabolism; pyridoxal 5'-phosphate salvage; pyridoxal 5'-phosphate from pyridoxine 5'-phosphate: step 1/1. Functionally, catalyzes the oxidation of either pyridoxine 5'-phosphate (PNP) or pyridoxamine 5'-phosphate (PMP) into pyridoxal 5'-phosphate (PLP). This is Pyridoxine/pyridoxamine 5'-phosphate oxidase from Zymomonas mobilis subsp. mobilis (strain ATCC 31821 / ZM4 / CP4).